We begin with the raw amino-acid sequence, 490 residues long: Serine hydroxymethyltransferase (490 aa).

(6S)-5,6,7,8-tetrahydrofolate contacts are provided by residues L179 and 183-185 (GHL). Position 291 is an N6-(pyridoxal phosphate)lysine (K291). K362 participates in a covalent cross-link: Isoglutamyl lysine isopeptide (Lys-Gln) (interchain with Q-Cter in protein Pup).

Belongs to the SHMT family. In terms of assembly, homodimer. Pyridoxal 5'-phosphate serves as cofactor.

Its subcellular location is the cytoplasm. The enzyme catalyses (6R)-5,10-methylene-5,6,7,8-tetrahydrofolate + glycine + H2O = (6S)-5,6,7,8-tetrahydrofolate + L-serine. It functions in the pathway one-carbon metabolism; tetrahydrofolate interconversion. The protein operates within amino-acid biosynthesis; glycine biosynthesis; glycine from L-serine: step 1/1. In terms of biological role, catalyzes the reversible interconversion of serine and glycine with tetrahydrofolate (THF) serving as the one-carbon carrier. This reaction serves as the major source of one-carbon groups required for the biosynthesis of purines, thymidylate, methionine, and other important biomolecules. Also exhibits THF-independent aldolase activity toward beta-hydroxyamino acids, producing glycine and aldehydes, via a retro-aldol mechanism. This Mycolicibacterium smegmatis (strain ATCC 700084 / mc(2)155) (Mycobacterium smegmatis) protein is Serine hydroxymethyltransferase.